We begin with the raw amino-acid sequence, 161 residues long: Transcriptional repressor NrdR (161 aa).

A zinc finger lies at 3 to 34; the sequence is CPSCQHTDSRVLESRAADSGKSVRRRRECLNC. Positions 49 to 139 constitute an ATP-cone domain; it reads ITVVKRSGTR…VYGKFSGISD (91 aa).

This sequence belongs to the NrdR family. Requires Zn(2+) as cofactor.

Functionally, negatively regulates transcription of bacterial ribonucleotide reductase nrd genes and operons by binding to NrdR-boxes. In Synechococcus sp. (strain RCC307), this protein is Transcriptional repressor NrdR.